The chain runs to 139 residues: Histone H2B (139 aa).

Basic and acidic residues predominate over residues 1–10 (MAPKVAEKKP). Positions 1–47 (MAPKVAEKKPSLAGKAPAGKAPAEKKEAGKKTTTATGEKKKRTKARK) are disordered. N6-acetyllysine; alternate occurs at positions 8 and 9. Glycyl lysine isopeptide (Lys-Gly) (interchain with G-Cter in SUMO); alternate cross-links involve residues Lys8 and Lys9. Lys15 is subject to N6-acetyllysine. At Lys25 the chain carries N6-acetyllysine; alternate. Residue Lys25 forms a Glycyl lysine isopeptide (Lys-Gly) (interchain with G-Cter in SUMO); alternate linkage. Residue Lys26 forms a Glycyl lysine isopeptide (Lys-Gly) (interchain with G-Cter in SUMO) linkage. Lys133 participates in a covalent cross-link: Glycyl lysine isopeptide (Lys-Gly) (interchain with G-Cter in ubiquitin).

This sequence belongs to the histone H2B family. In terms of assembly, the nucleosome is a histone octamer containing two molecules each of H2A, H2B, H3 and H4 assembled in one H3-H4 heterotetramer and two H2A-H2B heterodimers. The octamer wraps approximately 147 bp of DNA. Post-translationally, monoubiquitinated by the UBC2-BRE1 complex to form H2BK123ub1. H2BK123ub1 gives a specific tag for epigenetic transcriptional activation and is also prerequisite for H3K4me and H3K79me formation. H2BK123ub1 also modulates the formation of double-strand breaks during meiosis and is a prerequisite for DNA-damage checkpoint activation. Acetylated by GCN5 to form H2BK11ac and H2BK16ac. H2BK16ac can also be formed by ESA1. Acetylation of N-terminal lysines and particularly formation of H2BK11acK16ac has a positive effect on transcription. In terms of processing, sumoylation to form H2BK6su or H2BK7su, and probably also H2BK16su or H2BK17su, occurs preferentially near the telomeres and represses gene transcription.

It localises to the nucleus. The protein localises to the chromosome. In terms of biological role, core component of nucleosome. Nucleosomes wrap and compact DNA into chromatin, limiting DNA accessibility to the cellular machineries which require DNA as a template. Histones thereby play a central role in transcription regulation, DNA repair, DNA replication and chromosomal stability. DNA accessibility is regulated via a complex set of post-translational modifications of histones, also called histone code, and nucleosome remodeling. The polypeptide is Histone H2B (HTB1) (Yarrowia lipolytica (strain CLIB 122 / E 150) (Yeast)).